The following is a 290-amino-acid chain: Fructose-bisphosphate aldolase (290 aa).

A D-glyceraldehyde 3-phosphate-binding site is contributed by serine 51. Aspartate 86 functions as the Proton donor in the catalytic mechanism. Zn(2+) contacts are provided by histidine 87, aspartate 107, glutamate 137, and histidine 179. Glycine 180 contributes to the dihydroxyacetone phosphate binding site. Position 208 (histidine 208) interacts with Zn(2+). Dihydroxyacetone phosphate is bound by residues 209–211 (GGS) and 230–233 (NINT).

Belongs to the class II fructose-bisphosphate aldolase family. Homodimer. It depends on Zn(2+) as a cofactor.

The catalysed reaction is beta-D-fructose 1,6-bisphosphate = D-glyceraldehyde 3-phosphate + dihydroxyacetone phosphate. Its pathway is carbohydrate degradation; glycolysis; D-glyceraldehyde 3-phosphate and glycerone phosphate from D-glucose: step 4/4. Catalyzes the aldol condensation of dihydroxyacetone phosphate (DHAP or glycerone-phosphate) with glyceraldehyde 3-phosphate (G3P) to form fructose 1,6-bisphosphate (FBP) in gluconeogenesis and the reverse reaction in glycolysis. This is Fructose-bisphosphate aldolase (fba) from Ureaplasma parvum serovar 3 (strain ATCC 700970).